We begin with the raw amino-acid sequence, 142 residues long: 3-hydroxyacyl-[acyl-carrier-protein] dehydratase FabZ (142 aa).

His-50 is a catalytic residue.

Belongs to the thioester dehydratase family. FabZ subfamily.

The protein localises to the cytoplasm. It carries out the reaction a (3R)-hydroxyacyl-[ACP] = a (2E)-enoyl-[ACP] + H2O. Functionally, involved in unsaturated fatty acids biosynthesis. Catalyzes the dehydration of short chain beta-hydroxyacyl-ACPs and long chain saturated and unsaturated beta-hydroxyacyl-ACPs. The sequence is that of 3-hydroxyacyl-[acyl-carrier-protein] dehydratase FabZ from Clostridium botulinum (strain Alaska E43 / Type E3).